The primary structure comprises 290 residues: Signal recognition particle receptor subunit beta (290 aa).

Residues 44–64 (VLLLALFTLIFIIIISKLFGS) form a helical membrane-spanning segment. GTP is bound by residues 92–100 (GLSNAGKTA), 114–117 (THTS), glycine 140, and alanine 268.

It belongs to the SRP receptor beta subunit family. As to quaternary structure, heterodimer of an alpha and a beta chain.

Its subcellular location is the endoplasmic reticulum membrane. In terms of biological role, component of the signal recognition particle (SRP) complex receptor (SR). Ensures, in conjunction with the SRP complex, the correct targeting of the nascent secretory proteins to the endoplasmic reticulum membrane system. May mediate the membrane association of SR. This Dictyostelium discoideum (Social amoeba) protein is Signal recognition particle receptor subunit beta (srprb).